A 445-amino-acid polypeptide reads, in one-letter code: Anaerobilin synthase (445 aa).

The 236-residue stretch at 52–287 folds into the Radical SAM core domain; that stretch reads TASPRKRLVY…LQGCDFMDDA (236 aa). Tyr-61 serves as a coordination point for S-adenosyl-L-methionine. [4Fe-4S] cluster is bound by residues Cys-67 and Cys-71. Phe-73 contacts S-adenosyl-L-methionine. Cys-74 lines the [4Fe-4S] cluster pocket. Residues Gly-118, 119–120, Glu-151, Gln-178, Arg-190, and Asp-215 contribute to the S-adenosyl-L-methionine site; that span reads GT.

This sequence belongs to the anaerobic coproporphyrinogen-III oxidase family. ChuW/HutW subfamily. The cofactor is [4Fe-4S] cluster.

It catalyses the reaction 2 reduced [flavodoxin] + heme b + 2 S-adenosyl-L-methionine = anaerobilin + 2 oxidized [flavodoxin] + Fe(2+) + 5'-deoxyadenosine + L-methionine + S-adenosyl-L-homocysteine. Its activity is regulated as follows. Inhibited by exposure to molecular oxygen. Functionally, involved in heme degradation and iron utilization under anaerobic conditions. Catalyzes a radical-mediated mechanism facilitating iron liberation and the production of the tetrapyrrole product anaerobilin. Can use heme, mesoheme and deuteroheme as substrates. This is Anaerobilin synthase from Escherichia coli O157:H7.